We begin with the raw amino-acid sequence, 426 residues long: Glucose-6-phosphate isomerase (426 aa).

The Proton donor role is filled by Glu282. Active-site residues include His303 and Lys419.

It belongs to the GPI family.

The protein localises to the cytoplasm. The catalysed reaction is alpha-D-glucose 6-phosphate = beta-D-fructose 6-phosphate. Its pathway is carbohydrate biosynthesis; gluconeogenesis. It functions in the pathway carbohydrate degradation; glycolysis; D-glyceraldehyde 3-phosphate and glycerone phosphate from D-glucose: step 2/4. Functionally, catalyzes the reversible isomerization of glucose-6-phosphate to fructose-6-phosphate. The chain is Glucose-6-phosphate isomerase from Mycoplasmoides gallisepticum (strain R(low / passage 15 / clone 2)) (Mycoplasma gallisepticum).